Here is an 885-residue protein sequence, read N- to C-terminus: DNA mismatch repair protein MutS (885 aa).

Residue 626–633 (GPNMGGKS) coordinates ATP.

It belongs to the DNA mismatch repair MutS family.

In terms of biological role, this protein is involved in the repair of mismatches in DNA. It is possible that it carries out the mismatch recognition step. This protein has a weak ATPase activity. The sequence is that of DNA mismatch repair protein MutS from Burkholderia lata (strain ATCC 17760 / DSM 23089 / LMG 22485 / NCIMB 9086 / R18194 / 383).